A 921-amino-acid chain; its full sequence is Sodium/calcium exchanger 2 (921 aa).

An N-terminal signal peptide occupies residues 1–20 (MAPLALVGVALLLGAPHCLG). Residues 21–68 (EATPTPSLPPPPANDSDASPGGCQGSYRCQPGVLLPVWEPDDPSLGDK) are Extracellular-facing. The segment at 23 to 42 (TPTPSLPPPPANDSDASPGG) is disordered. N-linked (GlcNAc...) asparagine glycosylation occurs at Asn34. Residues 69 to 90 (AARAVVYFVAMVYMFLGLSIIA) traverse the membrane as a helical segment. The Cytoplasmic segment spans residues 91–130 (DRFMASIEVITSKEKEITITKANGETSVGTVRIWNETVSN). The chain crosses the membrane as a helical span at residues 131-152 (LTLMALGSSAPEILLSVIEVCG). The stretch at 135-175 (ALGSSAPEILLSVIEVCGHNFQAGELGPGTIVGSAAFNMFV) is one Alpha-1 repeat. Topologically, residues 153–164 (HNFQAGELGPGT) are extracellular. A helical membrane pass occupies residues 165 to 185 (IVGSAAFNMFVVIAVCVYVIP). Residues 186-196 (AGESRKIKHLR) are Cytoplasmic-facing. A helical membrane pass occupies residues 197–219 (VFFVTASWSIFAYVWLYLILAVF). Over 220–222 (SPG) the chain is Extracellular. The helical transmembrane segment at 223–246 (VVQVWEALLTLVFFPVCVVFAWMA) threads the bilayer. At 247–720 (DKRLLFYKYV…DGSREERLPS (474 aa)) the chain is on the cytoplasmic side. A putative calmodulin-binding region region spans residues 248–267 (KRLLFYKYVYKRYRTDPRSG). The disordered stretch occupies residues 372 to 391 (AADAARRPGANDGAPDDEDD). Calx-beta domains are found at residues 384-483 (GAPD…VRLL) and 512-612 (ATVT…IELG). Ca(2+) contacts are provided by Glu407, Asp443, Asp468, Asp469, Ile471, Glu473, Glu476, Asp518, Asp519, Asp520, Glu536, Asp598, Glu599, and Glu600. Position 622 is a phosphoserine (Ser622). Glu665 is a Ca(2+) binding site. Residues 721–740 (CFDYVMHFLTVFWKVLFACL) form a helical membrane-spanning segment. Residues 741-747 (PPTEYCH) lie on the Extracellular side of the membrane. The chain crosses the membrane as a helical span at residues 748–770 (GWACFGVCILVIGLLTALIGDLA). Topologically, residues 771–772 (SH) are cytoplasmic. The helical transmembrane segment at 773 to 791 (FGCTVGLKDSVNAVVFVAL) threads the bilayer. The Alpha-2 repeat unit spans residues 790 to 826 (ALGTSIPDTFASKVAALQDQCADASIGNVTGSNAVNV). Residues 792 to 822 (GTSIPDTFASKVAALQDQCADASIGNVTGSN) lie on the Extracellular side of the membrane. N-linked (GlcNAc...) asparagine glycosylation occurs at Asn817. Residues 823 to 843 (AVNVFLGLGVAWSVAAVYWAV) form a helical membrane-spanning segment. At 844-854 (QGRPFEVRTGT) the chain is on the cytoplasmic side. Residues 855–875 (LAFSVTLFTVFAFVGIAVLLY) traverse the membrane as a helical segment. Topologically, residues 876–892 (RRRPHIGGELGGPRGPK) are extracellular. Residues 893–909 (LATTALFLGLWFLYILF) traverse the membrane as a helical segment. The Cytoplasmic portion of the chain corresponds to 910–921 (ASLEAYCHIRGF).

It belongs to the Ca(2+):cation antiporter (CaCA) (TC 2.A.19) family. SLC8 subfamily. In terms of tissue distribution, detected in neocortex and hippocampus on pyramidal cells, astrocyte processes and dendrites (at protein level). Brain and skeletal muscle.

It localises to the cell membrane. The protein resides in the basolateral cell membrane. Its subcellular location is the perikaryon. It is found in the cell projection. The protein localises to the dendrite. It localises to the dendritic spine. It carries out the reaction Ca(2+)(in) + 3 Na(+)(out) = Ca(2+)(out) + 3 Na(+)(in). Its activity is regulated as follows. Calcium transport is down-regulated by Na(+) and stimulated by Ca(2+). Functionally, mediates the electrogenic exchange of Ca(2+) against Na(+) ions across the cell membrane, and thereby contributes to the regulation of cytoplasmic Ca(2+) levels and Ca(2+)-dependent cellular processes. Contributes to cellular Ca(2+) homeostasis in excitable cells. Contributes to the rapid decrease of cytoplasmic Ca(2+) levels back to baseline after neuronal activation, and thereby contributes to modulate synaptic plasticity, learning and memory. Plays a role in regulating urinary Ca(2+) and Na(+) excretion. The polypeptide is Sodium/calcium exchanger 2 (Slc8a2) (Rattus norvegicus (Rat)).